The sequence spans 101 residues: Movement protein (101 aa).

Residues 30–50 traverse the membrane as a helical segment; it reads EVAILSFVALICFYLLYLWVL. Residues 75 to 101 form a disordered region; the sequence is VDRSNPIPNIPAPPSQGNPGPFVPGTG.

The protein belongs to the mastrevirus movement protein family. As to quaternary structure, interacts with the capsid protein (CP). Part of a MP-CP-viral DNA complex.

Its subcellular location is the host membrane. Its function is as follows. Involved in the viral transport within, and between cells. The chain is Movement protein from Maize streak virus genotype A (isolate Kenya) (MSV).